The sequence spans 394 residues: 8-amino-7-oxononanoate synthase (394 aa).

A substrate-binding site is contributed by arginine 18. 105-106 (GY) contributes to the pyridoxal 5'-phosphate binding site. Residue histidine 130 participates in substrate binding. The pyridoxal 5'-phosphate site is built by serine 175, histidine 203, and threonine 232. The residue at position 235 (lysine 235) is an N6-(pyridoxal phosphate)lysine. Threonine 349 provides a ligand contact to substrate.

The protein belongs to the class-II pyridoxal-phosphate-dependent aminotransferase family. BioF subfamily. As to quaternary structure, homodimer. Pyridoxal 5'-phosphate serves as cofactor.

It carries out the reaction 6-carboxyhexanoyl-[ACP] + L-alanine + H(+) = (8S)-8-amino-7-oxononanoate + holo-[ACP] + CO2. It participates in cofactor biosynthesis; biotin biosynthesis. Its function is as follows. Catalyzes the decarboxylative condensation of pimeloyl-[acyl-carrier protein] and L-alanine to produce 8-amino-7-oxononanoate (AON), [acyl-carrier protein], and carbon dioxide. The sequence is that of 8-amino-7-oxononanoate synthase from Marinobacter nauticus (strain ATCC 700491 / DSM 11845 / VT8) (Marinobacter aquaeolei).